Consider the following 150-residue polypeptide: MKNKNLFPMLSVSEVNELLKQEEIFNFIGIEFEKLEKGYSRLKFNFNEKLTRIGGILHGGVVFSAVDYAGSYAVRTLDKVKDGVTAELKINFLKPMKEGPFTVEPRVISEGKRLVVVDISAYDGNSNLCAKALGTWVVYRETNSETQLSS.

It belongs to the thioesterase PaaI family.

The sequence is that of Putative esterase SSO1253 from Saccharolobus solfataricus (strain ATCC 35092 / DSM 1617 / JCM 11322 / P2) (Sulfolobus solfataricus).